Reading from the N-terminus, the 127-residue chain is Protein LLP homolog (127 aa).

Residues 1-21 are compositionally biased toward basic residues; it reads MAKSLRSKWKRKMRAEKRKKN. A disordered region spans residues 1–24; it reads MAKSLRSKWKRKMRAEKRKKNAPK. Glycyl lysine isopeptide (Lys-Gly) (interchain with G-Cter in SUMO2) cross-links involve residues K65 and K72. A compositionally biased stretch (basic residues) spans 98 to 120; that stretch reads RQRKRLKAKRERKKGKSKVKAMK. The interval 98–127 is disordered; that stretch reads RQRKRLKAKRERKKGKSKVKAMKAAKGLTW.

It belongs to the learning-associated protein family. In terms of assembly, interacts with CTCF, MYO1C and with the transcriptional machinery, including RNA polymerase II and TBP.

The protein localises to the nucleus. It localises to the nucleolus. It is found in the chromosome. In terms of biological role, in hippocampal neurons, regulates dendritic and spine growth and synaptic transmission. The polypeptide is Protein LLP homolog (LLPH) (Bos taurus (Bovine)).